The chain runs to 491 residues: COP9 signalosome complex subunit 1 (491 aa).

The PCI domain occupies 269-431; the sequence is CLLLASFDHC…KILYARDVDQ (163 aa). Residues 465–491 form a disordered region; sequence HVKSPPREGSQGELTPANSQSRMSTNM. Phosphoserine occurs at positions 468 and 474. Positions 476 to 491 are enriched in polar residues; that stretch reads GELTPANSQSRMSTNM. A Phosphothreonine modification is found at threonine 479. Position 483 is a phosphoserine (serine 483).

This sequence belongs to the CSN1 family. Component of the CSN complex, composed of COPS1/GPS1, COPS2, COPS3, COPS4, COPS5, COPS6, COPS7 (COPS7A or COPS7B), COPS8 and COPS9 isoform 1. In the complex, it probably interacts directly with COPS2, COPS3, COPS4 and COPS5. Interacts directly with inositol kinase ITPK1. Interacts with CAPN8. Interacts with USP48. Interacts with ASB4; this interaction negatively regulates GPS1. Widely expressed.

It localises to the cytoplasm. It is found in the nucleus. In terms of biological role, essential component of the COP9 signalosome complex (CSN), a complex involved in various cellular and developmental processes. The CSN complex is an essential regulator of the ubiquitin (Ubl) conjugation pathway by mediating the deneddylation of the cullin subunits of SCF-type E3 ligase complexes, leading to decrease the Ubl ligase activity of SCF-type complexes such as SCF, CSA or DDB2. The complex is also involved in phosphorylation of p53/TP53, c-jun/JUN, IkappaBalpha/NFKBIA, ITPK1 and IRF8/ICSBP, possibly via its association with CK2 and PKD kinases. CSN-dependent phosphorylation of TP53 and JUN promotes and protects degradation by the Ubl system, respectively. Suppresses G-protein- and mitogen-activated protein kinase-mediated signal transduction. The chain is COP9 signalosome complex subunit 1 (GPS1) from Homo sapiens (Human).